The following is a 69-amino-acid chain: Large ribosomal subunit protein bL31 (69 aa).

The Zn(2+) site is built by cysteine 16, cysteine 18, cysteine 37, and cysteine 40.

The protein belongs to the bacterial ribosomal protein bL31 family. Type A subfamily. As to quaternary structure, part of the 50S ribosomal subunit. Requires Zn(2+) as cofactor.

Functionally, binds the 23S rRNA. This Teredinibacter turnerae (strain ATCC 39867 / T7901) protein is Large ribosomal subunit protein bL31.